The following is a 193-amino-acid chain: Peptidyl-tRNA hydrolase (193 aa).

Residue tyrosine 15 coordinates tRNA. Histidine 20 serves as the catalytic Proton acceptor. 3 residues coordinate tRNA: phenylalanine 65, asparagine 67, and asparagine 113.

This sequence belongs to the PTH family. As to quaternary structure, monomer.

The protein localises to the cytoplasm. It catalyses the reaction an N-acyl-L-alpha-aminoacyl-tRNA + H2O = an N-acyl-L-amino acid + a tRNA + H(+). In terms of biological role, hydrolyzes ribosome-free peptidyl-tRNAs (with 1 or more amino acids incorporated), which drop off the ribosome during protein synthesis, or as a result of ribosome stalling. Its function is as follows. Catalyzes the release of premature peptidyl moieties from peptidyl-tRNA molecules trapped in stalled 50S ribosomal subunits, and thus maintains levels of free tRNAs and 50S ribosomes. In Ehrlichia ruminantium (strain Gardel), this protein is Peptidyl-tRNA hydrolase.